The following is a 388-amino-acid chain: Succinate--CoA ligase [ADP-forming] subunit beta (388 aa).

The ATP-grasp domain occupies 9–244 (KEIFRSMGVA…LEEEDPKEIE (236 aa)). ATP contacts are provided by residues Lys46, 53-55 (GRG), Glu99, Cys102, and Glu107. 2 residues coordinate Mg(2+): Asn199 and Asp213. Substrate is bound by residues Asn264 and 321 to 323 (GIM).

The protein belongs to the succinate/malate CoA ligase beta subunit family. In terms of assembly, heterotetramer of two alpha and two beta subunits. The cofactor is Mg(2+).

The enzyme catalyses succinate + ATP + CoA = succinyl-CoA + ADP + phosphate. It carries out the reaction GTP + succinate + CoA = succinyl-CoA + GDP + phosphate. Its pathway is carbohydrate metabolism; tricarboxylic acid cycle; succinate from succinyl-CoA (ligase route): step 1/1. Its function is as follows. Succinyl-CoA synthetase functions in the citric acid cycle (TCA), coupling the hydrolysis of succinyl-CoA to the synthesis of either ATP or GTP and thus represents the only step of substrate-level phosphorylation in the TCA. The beta subunit provides nucleotide specificity of the enzyme and binds the substrate succinate, while the binding sites for coenzyme A and phosphate are found in the alpha subunit. The chain is Succinate--CoA ligase [ADP-forming] subunit beta from Staphylococcus aureus (strain MRSA252).